A 188-amino-acid polypeptide reads, in one-letter code: Elongation factor P (188 aa).

This sequence belongs to the elongation factor P family.

It is found in the cytoplasm. The protein operates within protein biosynthesis; polypeptide chain elongation. Its function is as follows. Involved in peptide bond synthesis. Stimulates efficient translation and peptide-bond synthesis on native or reconstituted 70S ribosomes in vitro. Probably functions indirectly by altering the affinity of the ribosome for aminoacyl-tRNA, thus increasing their reactivity as acceptors for peptidyl transferase. The polypeptide is Elongation factor P (Wolbachia sp. subsp. Drosophila simulans (strain wRi)).